Reading from the N-terminus, the 506-residue chain is Cysteine--tRNA ligase (506 aa).

Residue C34 coordinates Zn(2+). Positions 36 to 46 (PTVYDFAHIGN) match the 'HIGH' region motif. Zn(2+) is bound by residues C230, H269, and E273. Residues 302 to 306 (KMSKS) carry the 'KMSKS' region motif. ATP is bound at residue K305.

The protein belongs to the class-I aminoacyl-tRNA synthetase family. Monomer. It depends on Zn(2+) as a cofactor.

The protein resides in the cytoplasm. It catalyses the reaction tRNA(Cys) + L-cysteine + ATP = L-cysteinyl-tRNA(Cys) + AMP + diphosphate. This Brucella ovis (strain ATCC 25840 / 63/290 / NCTC 10512) protein is Cysteine--tRNA ligase.